A 532-amino-acid chain; its full sequence is Glucose-6-phosphate isomerase (532 aa).

Catalysis depends on Glu-322, which acts as the Proton donor. Active-site residues include His-351 and Lys-457.

The protein belongs to the GPI family.

It is found in the cytoplasm. It carries out the reaction alpha-D-glucose 6-phosphate = beta-D-fructose 6-phosphate. The protein operates within carbohydrate biosynthesis; gluconeogenesis. It participates in carbohydrate degradation; glycolysis; D-glyceraldehyde 3-phosphate and glycerone phosphate from D-glucose: step 2/4. Catalyzes the reversible isomerization of glucose-6-phosphate to fructose-6-phosphate. The sequence is that of Glucose-6-phosphate isomerase from Synechococcus sp. (strain JA-2-3B'a(2-13)) (Cyanobacteria bacterium Yellowstone B-Prime).